A 672-amino-acid polypeptide reads, in one-letter code: Probable urocanate hydratase (672 aa).

NAD(+)-binding positions include 128–129 (GG), Gln-206, 253–255 (GMS), Glu-273, 318–319 (NV), 340–344 (QTSLH), 351–352 (YY), Tyr-400, and Gly-592.

This sequence belongs to the urocanase family. The cofactor is NAD(+).

The enzyme catalyses 4-imidazolone-5-propanoate = trans-urocanate + H2O. It functions in the pathway amino-acid degradation; L-histidine degradation into L-glutamate; N-formimidoyl-L-glutamate from L-histidine: step 2/3. This Dictyostelium discoideum (Social amoeba) protein is Probable urocanate hydratase (uroc1).